The following is a 215-amino-acid chain: Ribosomal RNA small subunit methyltransferase G (215 aa).

S-adenosyl-L-methionine-binding positions include G78, L83, 128–129 (AE), and R146.

Belongs to the methyltransferase superfamily. RNA methyltransferase RsmG family.

It is found in the cytoplasm. It carries out the reaction guanosine(527) in 16S rRNA + S-adenosyl-L-methionine = N(7)-methylguanosine(527) in 16S rRNA + S-adenosyl-L-homocysteine. Specifically methylates the N7 position of guanine in position 527 of 16S rRNA. The polypeptide is Ribosomal RNA small subunit methyltransferase G (Anaeromyxobacter dehalogenans (strain 2CP-C)).